An 891-amino-acid polypeptide reads, in one-letter code: 26S proteasome non-ATPase regulatory subunit 2 homolog A (891 aa).

Positions 1 to 44 (MAPTQDPNSVGGGAKKDEATLKVPSKDPKKKDEKKDEDLSEEDL) are disordered. A Nuclear localization signal motif is present at residues 14-21 (AKKDEATL). Over residues 14–37 (AKKDEATLKVPSKDPKKKDEKKDE) the composition is skewed to basic and acidic residues. A Glycyl lysine isopeptide (Lys-Gly) (interchain with G-Cter in ubiquitin) cross-link involves residue K218. Residue T219 is modified to O-acetylthreonine. PC repeat units lie at residues 414-447 (SAAA…PIIA), 448-484 (GALL…SVRI), 485-519 (GAIM…PLDV), 522-556 (FASL…AELG), 565-594 (LGLG…KIRK), 674-705 (LALG…EVAM), and 724-739 (AGML…KDMS).

The protein belongs to the proteasome subunit S2 family. As to quaternary structure, component of the 19S regulatory particle (RP/PA700) base subcomplex of the 26S proteasome. The 26S proteasome is composed of a core protease (CP), known as the 20S proteasome, capped at one or both ends by the 19S regulatory particle (RP/PA700). The RP/PA700 complex is composed of at least 17 different subunits in two subcomplexes, the base and the lid, which form the portions proximal and distal to the 20S proteolytic core, respectively. Interacts with JMJ27. As to expression, expressed in stems, leaves, buds, flowers, siliques and developing seeds.

The protein localises to the nucleus. The protein resides in the cytoplasm. Acts as a regulatory subunit of the 26 proteasome which is involved in the ATP-dependent degradation of ubiquitinated proteins. Required during embryogenesis. Required for optimal plant growth and stress responses. Required for innate immunity. Prevents JMJ27 accumulation in non-drought conditions. This is 26S proteasome non-ATPase regulatory subunit 2 homolog A from Arabidopsis thaliana (Mouse-ear cress).